Reading from the N-terminus, the 254-residue chain is tRNA (guanine-N(1)-)-methyltransferase (254 aa).

Residues G112 and 131 to 136 (IGDYIL) each bind S-adenosyl-L-methionine.

It belongs to the RNA methyltransferase TrmD family. Homodimer.

The protein localises to the cytoplasm. It carries out the reaction guanosine(37) in tRNA + S-adenosyl-L-methionine = N(1)-methylguanosine(37) in tRNA + S-adenosyl-L-homocysteine + H(+). In terms of biological role, specifically methylates guanosine-37 in various tRNAs. This chain is tRNA (guanine-N(1)-)-methyltransferase, found in Sulfurihydrogenibium sp. (strain YO3AOP1).